A 121-amino-acid polypeptide reads, in one-letter code: Large ribosomal subunit protein uL18 (121 aa).

Belongs to the universal ribosomal protein uL18 family. As to quaternary structure, part of the 50S ribosomal subunit; part of the 5S rRNA/L5/L18/L25 subcomplex. Contacts the 5S and 23S rRNAs.

Functionally, this is one of the proteins that bind and probably mediate the attachment of the 5S RNA into the large ribosomal subunit, where it forms part of the central protuberance. This Paraburkholderia xenovorans (strain LB400) protein is Large ribosomal subunit protein uL18.